Reading from the N-terminus, the 388-residue chain is Succinate--CoA ligase [ADP-forming] subunit beta (388 aa).

An ATP-grasp domain is found at 9-244 (KQLFAEFGLP…PSQEDKREAH (236 aa)). ATP contacts are provided by residues K46, 53-55 (GRG), E99, S102, and E107. Positions 199 and 213 each coordinate Mg(2+). Substrate is bound by residues N264 and 321–323 (GIV).

The protein belongs to the succinate/malate CoA ligase beta subunit family. In terms of assembly, heterotetramer of two alpha and two beta subunits. The cofactor is Mg(2+).

The enzyme catalyses succinate + ATP + CoA = succinyl-CoA + ADP + phosphate. The catalysed reaction is GTP + succinate + CoA = succinyl-CoA + GDP + phosphate. Its pathway is carbohydrate metabolism; tricarboxylic acid cycle; succinate from succinyl-CoA (ligase route): step 1/1. In terms of biological role, succinyl-CoA synthetase functions in the citric acid cycle (TCA), coupling the hydrolysis of succinyl-CoA to the synthesis of either ATP or GTP and thus represents the only step of substrate-level phosphorylation in the TCA. The beta subunit provides nucleotide specificity of the enzyme and binds the substrate succinate, while the binding sites for coenzyme A and phosphate are found in the alpha subunit. The chain is Succinate--CoA ligase [ADP-forming] subunit beta from Vibrio vulnificus (strain CMCP6).